We begin with the raw amino-acid sequence, 385 residues long: 3-hydroxyisobutyryl-CoA hydrolase, mitochondrial (385 aa).

4 residues coordinate substrate: Glu-120, Gly-145, Glu-168, and Asp-176.

Belongs to the enoyl-CoA hydratase/isomerase family.

It localises to the mitochondrion. The enzyme catalyses 3-hydroxy-2-methylpropanoyl-CoA + H2O = 3-hydroxy-2-methylpropanoate + CoA + H(+). It participates in amino-acid degradation; L-valine degradation. Functionally, hydrolyzes 3-hydroxyisobutyryl-CoA (HIBYL-CoA), a saline catabolite. Has high activity toward isobutyryl-CoA. Could be an isobutyryl-CoA dehydrogenase that functions in valine catabolism. Also hydrolyzes 3-hydroxypropanoyl-CoA. In Xenopus tropicalis (Western clawed frog), this protein is 3-hydroxyisobutyryl-CoA hydrolase, mitochondrial (hibch).